The following is a 1216-amino-acid chain: Probable cation-transporting ATPase 13A5 (1216 aa).

A run of 5 helical transmembrane segments spans residues 33-53 (RALC…MFYW), 198-218 (LLVK…LTLW), 222-242 (GYIE…VLSV), 401-421 (FMVF…GVYM), and 433-453 (MALI…LTIG). Catalysis depends on Asp-486, which acts as the 4-aspartylphosphate intermediate. Asn-650 and Asn-817 each carry an N-linked (GlcNAc...) asparagine glycan. Residues Asp-848 and Asp-852 each coordinate Mg(2+). The next 6 helical transmembrane spans lie at 896-916 (ALVS…IQFI), 933-950 (YLLQ…TMSI), 971-991 (LLLS…CTFL), 1040-1060 (FEGT…AFIF), 1075-1095 (LFSL…FCDF), and 1113-1133 (VSIL…EDAV).

Belongs to the cation transport ATPase (P-type) (TC 3.A.3) family. Type V subfamily. In terms of tissue distribution, specifically expressed in brain and stomach.

The protein localises to the membrane. The catalysed reaction is ATP + H2O = ADP + phosphate + H(+). This chain is Probable cation-transporting ATPase 13A5 (Atp13a5), found in Mus musculus (Mouse).